We begin with the raw amino-acid sequence, 433 residues long: Serine--tRNA ligase (433 aa).

L-serine is bound at residue 235–237; the sequence is TSE. 266–268 is an ATP binding site; it reads RSE. E289 is an L-serine binding site. Residue 353–356 participates in ATP binding; it reads EISS. S388 lines the L-serine pocket.

This sequence belongs to the class-II aminoacyl-tRNA synthetase family. Type-1 seryl-tRNA synthetase subfamily. As to quaternary structure, homodimer. The tRNA molecule binds across the dimer.

It is found in the cytoplasm. The enzyme catalyses tRNA(Ser) + L-serine + ATP = L-seryl-tRNA(Ser) + AMP + diphosphate + H(+). It carries out the reaction tRNA(Sec) + L-serine + ATP = L-seryl-tRNA(Sec) + AMP + diphosphate + H(+). It functions in the pathway aminoacyl-tRNA biosynthesis; selenocysteinyl-tRNA(Sec) biosynthesis; L-seryl-tRNA(Sec) from L-serine and tRNA(Sec): step 1/1. In terms of biological role, catalyzes the attachment of serine to tRNA(Ser). Is also able to aminoacylate tRNA(Sec) with serine, to form the misacylated tRNA L-seryl-tRNA(Sec), which will be further converted into selenocysteinyl-tRNA(Sec). In Burkholderia ambifaria (strain ATCC BAA-244 / DSM 16087 / CCUG 44356 / LMG 19182 / AMMD) (Burkholderia cepacia (strain AMMD)), this protein is Serine--tRNA ligase.